The chain runs to 359 residues: Acyl-CoA desaturase 3 (359 aa).

Residues 1–34 (MPGHLLQEEMTPSYTTTTTITAPPSGSLQNGREK) are disordered. The Cytoplasmic portion of the chain corresponds to 1–72 (MPGHLLQEEM…EGPPPKLEYV (72 aa)). Positions 11–27 (TPSYTTTTTITAPPSGS) are enriched in low complexity. Residues 73-93 (WRNIILMALLHVGALYGITLV) traverse the membrane as a helical segment. Residue N75 coordinates substrate. At 94 to 97 (PSCK) the chain is on the lumenal side. Residues 98–118 (LYTCLFAFVYYVISIEGIGAG) traverse the membrane as a helical segment. Residues 119–217 (VHRLWSHRTY…EKLVMFQRRY (99 aa)) lie on the Cytoplasmic side of the membrane. Fe cation is bound by residues H120 and H125. A Histidine box-1 motif is present at residues 120–125 (HRLWSH). Substrate contacts are provided by N148, R155, and D156. Fe cation-binding residues include H157, H160, and H161. Positions 157-161 (HRAHH) match the Histidine box-2 motif. 2 residues coordinate substrate: R188 and K189. The residue at position 203 (S203) is a Phosphoserine. A helical transmembrane segment spans residues 218–237 (YKPGILLMCFILPTLVPWYC). The Lumenal portion of the chain corresponds to 238 to 241 (WGET). A helical transmembrane segment spans residues 242 to 263 (FLNSFYVATLLRYAVVLNATWL). W262 provides a ligand contact to substrate. The Cytoplasmic segment spans residues 264–359 (VNSAAHLYGY…RTGDGSHKSG (96 aa)). 4 residues coordinate Fe cation: H269, H298, H301, and H302. The Histidine box-3 signature appears at 298 to 302 (HNYHH).

The protein belongs to the fatty acid desaturase type 1 family. The cofactor is Fe(2+). Detected in skin, but at lower levels compared to Scd1. Detected in the middlle part of the sebaceous gland, but not in hair follicle. Not detected in liver and brain.

Its subcellular location is the endoplasmic reticulum membrane. It is found in the microsome membrane. It catalyses the reaction hexadecanoyl-CoA + 2 Fe(II)-[cytochrome b5] + O2 + 2 H(+) = (9Z)-hexadecenoyl-CoA + 2 Fe(III)-[cytochrome b5] + 2 H2O. Stearoyl-CoA desaturase that utilizes O(2) and electrons from reduced cytochrome b5 to introduce the first double bond into saturated fatty acyl-CoA substrates. Catalyzes the insertion of a cis double bond at the delta-9 position into fatty acyl-CoA substrates including palmitoyl-CoA. Has a strong preference for saturated fatty acids with chain lengths of 14 or 16 carbon atoms (C14:0 and C16:0), and has only very low activity with stearatate (C18:0). Required for the biosynthesis of membrane phospholipids, cholesterol esters and triglycerides. The polypeptide is Acyl-CoA desaturase 3 (Mus musculus (Mouse)).